The following is a 294-amino-acid chain: Lipoyl synthase (294 aa).

7 residues coordinate [4Fe-4S] cluster: C41, C46, C52, C67, C71, C74, and S281. In terms of domain architecture, Radical SAM core spans 53–270; it reads FNNGTATFMI…KLESLAMGFT (218 aa).

It belongs to the radical SAM superfamily. Lipoyl synthase family. Requires [4Fe-4S] cluster as cofactor.

Its subcellular location is the cytoplasm. It catalyses the reaction [[Fe-S] cluster scaffold protein carrying a second [4Fe-4S](2+) cluster] + N(6)-octanoyl-L-lysyl-[protein] + 2 oxidized [2Fe-2S]-[ferredoxin] + 2 S-adenosyl-L-methionine + 4 H(+) = [[Fe-S] cluster scaffold protein] + N(6)-[(R)-dihydrolipoyl]-L-lysyl-[protein] + 4 Fe(3+) + 2 hydrogen sulfide + 2 5'-deoxyadenosine + 2 L-methionine + 2 reduced [2Fe-2S]-[ferredoxin]. It participates in protein modification; protein lipoylation via endogenous pathway; protein N(6)-(lipoyl)lysine from octanoyl-[acyl-carrier-protein]: step 2/2. Catalyzes the radical-mediated insertion of two sulfur atoms into the C-6 and C-8 positions of the octanoyl moiety bound to the lipoyl domains of lipoate-dependent enzymes, thereby converting the octanoylated domains into lipoylated derivatives. In Baumannia cicadellinicola subsp. Homalodisca coagulata, this protein is Lipoyl synthase.